The primary structure comprises 232 residues: Ubiquinone biosynthesis O-methyltransferase (232 aa).

S-adenosyl-L-methionine contacts are provided by R36, G55, D76, and L120.

Belongs to the methyltransferase superfamily. UbiG/COQ3 family.

It catalyses the reaction a 3-demethylubiquinol + S-adenosyl-L-methionine = a ubiquinol + S-adenosyl-L-homocysteine + H(+). It carries out the reaction a 3-(all-trans-polyprenyl)benzene-1,2-diol + S-adenosyl-L-methionine = a 2-methoxy-6-(all-trans-polyprenyl)phenol + S-adenosyl-L-homocysteine + H(+). It functions in the pathway cofactor biosynthesis; ubiquinone biosynthesis. Its function is as follows. O-methyltransferase that catalyzes the 2 O-methylation steps in the ubiquinone biosynthetic pathway. This chain is Ubiquinone biosynthesis O-methyltransferase, found in Pseudomonas fluorescens (strain SBW25).